A 189-amino-acid chain; its full sequence is Potassium-transporting ATPase KdpC subunit (189 aa).

A helical transmembrane segment spans residues 6-26 (PAILLFIMFTIICGGIYPALV).

The protein belongs to the KdpC family. As to quaternary structure, the system is composed of three essential subunits: KdpA, KdpB and KdpC.

It localises to the cell inner membrane. Its function is as follows. Part of the high-affinity ATP-driven potassium transport (or Kdp) system, which catalyzes the hydrolysis of ATP coupled with the electrogenic transport of potassium into the cytoplasm. This subunit acts as a catalytic chaperone that increases the ATP-binding affinity of the ATP-hydrolyzing subunit KdpB by the formation of a transient KdpB/KdpC/ATP ternary complex. In Trichlorobacter lovleyi (strain ATCC BAA-1151 / DSM 17278 / SZ) (Geobacter lovleyi), this protein is Potassium-transporting ATPase KdpC subunit.